The sequence spans 418 residues: Tyrosine--tRNA ligase (418 aa).

Tyr34 serves as a coordination point for L-tyrosine. Positions Pro39–His48 match the 'HIGH' region motif. L-tyrosine is bound by residues Tyr169 and Gln173. Residues Lys229–Ser233 carry the 'KMSKS' region motif. Lys232 lines the ATP pocket. An S4 RNA-binding domain is found at Leu352–Tyr418.

This sequence belongs to the class-I aminoacyl-tRNA synthetase family. TyrS type 1 subfamily. As to quaternary structure, homodimer.

It localises to the cytoplasm. The enzyme catalyses tRNA(Tyr) + L-tyrosine + ATP = L-tyrosyl-tRNA(Tyr) + AMP + diphosphate + H(+). Functionally, catalyzes the attachment of tyrosine to tRNA(Tyr) in a two-step reaction: tyrosine is first activated by ATP to form Tyr-AMP and then transferred to the acceptor end of tRNA(Tyr). The chain is Tyrosine--tRNA ligase from Streptococcus pyogenes serotype M6 (strain ATCC BAA-946 / MGAS10394).